The chain runs to 71 residues: Small ribosomal subunit protein bS21 (71 aa).

The protein belongs to the bacterial ribosomal protein bS21 family.

This chain is Small ribosomal subunit protein bS21, found in Thioalkalivibrio sulfidiphilus (strain HL-EbGR7).